A 284-amino-acid polypeptide reads, in one-letter code: Bifunctional protein FolD (284 aa).

NADP(+) is bound by residues 164 to 166 and Ser-189; that span reads GRS.

Belongs to the tetrahydrofolate dehydrogenase/cyclohydrolase family. Homodimer.

The catalysed reaction is (6R)-5,10-methylene-5,6,7,8-tetrahydrofolate + NADP(+) = (6R)-5,10-methenyltetrahydrofolate + NADPH. The enzyme catalyses (6R)-5,10-methenyltetrahydrofolate + H2O = (6R)-10-formyltetrahydrofolate + H(+). It participates in one-carbon metabolism; tetrahydrofolate interconversion. Functionally, catalyzes the oxidation of 5,10-methylenetetrahydrofolate to 5,10-methenyltetrahydrofolate and then the hydrolysis of 5,10-methenyltetrahydrofolate to 10-formyltetrahydrofolate. This is Bifunctional protein FolD from Listeria monocytogenes serovar 1/2a (strain ATCC BAA-679 / EGD-e).